Here is a 268-residue protein sequence, read N- to C-terminus: Phosphate import ATP-binding protein PstB 2 (268 aa).

The region spanning 19 to 263 (YKVRNMAFFY…PKDKRTEDYI (245 aa)) is the ABC transporter domain. 51–58 (GPSGCGKS) is an ATP binding site.

The protein belongs to the ABC transporter superfamily. Phosphate importer (TC 3.A.1.7) family. In terms of assembly, the complex is composed of two ATP-binding proteins (PstB), two transmembrane proteins (PstC and PstA) and a solute-binding protein (PstS).

Its subcellular location is the cell inner membrane. It catalyses the reaction phosphate(out) + ATP + H2O = ADP + 2 phosphate(in) + H(+). Part of the ABC transporter complex PstSACB involved in phosphate import. Responsible for energy coupling to the transport system. This chain is Phosphate import ATP-binding protein PstB 2, found in Gloeobacter violaceus (strain ATCC 29082 / PCC 7421).